A 165-amino-acid polypeptide reads, in one-letter code: Shikimate kinase (165 aa).

11-16 provides a ligand contact to ATP; it reads GAGKTT. Thr15 contacts Mg(2+). Asp33, Arg57, and Gly78 together coordinate substrate. ATP is bound at residue Arg116. Arg134 lines the substrate pocket.

It belongs to the shikimate kinase family. As to quaternary structure, monomer. The cofactor is Mg(2+).

It is found in the cytoplasm. It carries out the reaction shikimate + ATP = 3-phosphoshikimate + ADP + H(+). It participates in metabolic intermediate biosynthesis; chorismate biosynthesis; chorismate from D-erythrose 4-phosphate and phosphoenolpyruvate: step 5/7. Its function is as follows. Catalyzes the specific phosphorylation of the 3-hydroxyl group of shikimic acid using ATP as a cosubstrate. In Bacillus cereus (strain G9842), this protein is Shikimate kinase.